The sequence spans 438 residues: MPRRSPADPAAALAPRRTTLPGGLRVVTEFLPAVHSASVGVWVGVGSRDEGATVAGAAHFLEHLLFKSTPTRSAVDIAQAMDAVGGELNAFTAKEHTCYYAHVLGSDLPLAVDLVADVVLNGRCAADDVEVERDVVLEEIAMRDDDPEDALADMFLAALFGDHPVGRPVIGSAQSVSVMTRAQLQSFHLRRYTPEWMVVAAAGNVDHDGLVALVREHFGSRLVRGRRPVAPRKGTGRVNGSPRLTLVSRDAEQTHVSLGIRTPGRGWEHRWALSVLHTALGGGLSSRLFQEVRETRGLAYSVYSALDLFADSGALSVYAACLPERFADVMRVTADVLESVARDGITEAECGIAKGSLRGGLVLGLEDSSSRMSRLGRSELNYGKHRSIEHTLRQIEQVTVEEVNAVARHLLSRRYGAAVLGPHGSKRSLPQQLRAMVG.

Histidine 59 is a Zn(2+) binding site. The Proton acceptor role is filled by glutamate 62. The Zn(2+) site is built by histidine 63 and glutamate 139.

It belongs to the peptidase M16 family. It depends on Zn(2+) as a cofactor.

This is an uncharacterized protein from Mycobacterium tuberculosis (strain CDC 1551 / Oshkosh).